A 218-amino-acid polypeptide reads, in one-letter code: Oxidoreductase claN (218 aa).

NADP(+)-binding residues include Lys-38, Asp-57, and Asn-82. The active-site Proton donor is the Ser-134. NADP(+) contacts are provided by Tyr-148, Lys-152, and Thr-183. Tyr-148 (proton acceptor) is an active-site residue. Catalysis depends on Lys-152, which acts as the Lowers pKa of active site Tyr.

The protein belongs to the short-chain dehydrogenases/reductases (SDR) family.

It participates in pigment biosynthesis. Its function is as follows. Oxidoreductase; part of the gene cluster that mediates the biosynthesis of the bianthraquinone cladofulvin, a conidial pigment not required for virulence but that plays a role in fitness and resistance to environmental stresses including UV light and low-temperature stress. The pathway begins with the synthesis of atrochrysone thioester by the polyketide synthase (PKS) claG. The atrochrysone carboxyl ACP thioesterase claF then breaks the thioester bond and releases the atrochrysone carboxylic acid from claG. This compound is decarboxylated by claH to yield emodin, which is further converted to chrysophanol hydroquinone by the reductase claC and the dehydratase claB. The cytochrome P450 monooxygenase claM then catalyzes the dimerization of nataloe-emodin to cladofulvin. The sequence is that of Oxidoreductase claN from Passalora fulva (Tomato leaf mold).